We begin with the raw amino-acid sequence, 83 residues long: Cytochrome b559 subunit alpha (83 aa).

The chain crosses the membrane as a helical span at residues 21–35 (IIHTITVPMLFLAGW). Residue histidine 23 coordinates heme.

This sequence belongs to the PsbE/PsbF family. As to quaternary structure, heterodimer of an alpha subunit and a beta subunit. PSII is composed of 1 copy each of membrane proteins PsbA, PsbB, PsbC, PsbD, PsbE, PsbF, PsbH, PsbI, PsbJ, PsbK, PsbL, PsbM, PsbT, PsbX, PsbY, PsbZ, Psb30/Ycf12, peripheral proteins PsbO, CyanoQ (PsbQ), PsbU, PsbV and a large number of cofactors. It forms dimeric complexes. Requires heme b as cofactor.

Its subcellular location is the cellular thylakoid membrane. In terms of biological role, this b-type cytochrome is tightly associated with the reaction center of photosystem II (PSII). PSII is a light-driven water:plastoquinone oxidoreductase that uses light energy to abstract electrons from H(2)O, generating O(2) and a proton gradient subsequently used for ATP formation. It consists of a core antenna complex that captures photons, and an electron transfer chain that converts photonic excitation into a charge separation. The sequence is that of Cytochrome b559 subunit alpha from Acaryochloris marina (strain MBIC 11017).